We begin with the raw amino-acid sequence, 129 residues long: Small ribosomal subunit protein uS12 (129 aa).

The interval 1–25 (MPTYNQLVRFGRKSKTRKTKSPALE) is disordered. Positions 10 to 20 (FGRKSKTRKTK) are enriched in basic residues. 3-methylthioaspartic acid is present on D89. A disordered region spans residues 110–129 (RKQGRSRYGAPSKQVAVTKK).

Belongs to the universal ribosomal protein uS12 family. In terms of assembly, part of the 30S ribosomal subunit. Contacts proteins S8 and S17. May interact with IF1 in the 30S initiation complex.

Its function is as follows. With S4 and S5 plays an important role in translational accuracy. Interacts with and stabilizes bases of the 16S rRNA that are involved in tRNA selection in the A site and with the mRNA backbone. Located at the interface of the 30S and 50S subunits, it traverses the body of the 30S subunit contacting proteins on the other side and probably holding the rRNA structure together. The combined cluster of proteins S8, S12 and S17 appears to hold together the shoulder and platform of the 30S subunit. This Rickettsia canadensis (strain McKiel) protein is Small ribosomal subunit protein uS12.